Consider the following 140-residue polypeptide: Small ribosomal subunit protein uS19 (140 aa).

A disordered region spans residues 43-71; that stretch reads IERGLTTEQQKLRETVRDADPQKTANDPI. The segment covering 52-63 has biased composition (basic and acidic residues); the sequence is QKLRETVRDADP.

It belongs to the universal ribosomal protein uS19 family.

In terms of biological role, protein S19 forms a complex with S13 that binds strongly to the 16S ribosomal RNA. The polypeptide is Small ribosomal subunit protein uS19 (Haloquadratum walsbyi (strain DSM 16790 / HBSQ001)).